Reading from the N-terminus, the 372-residue chain is Phospho-N-acetylmuramoyl-pentapeptide-transferase (372 aa).

10 helical membrane-spanning segments follow: residues 25–45, 73–93, 98–118, 134–154, 176–196, 211–231, 251–271, 275–295, 300–320, and 349–369; these read RSLLSVLTSLTIGLVLGPIMI, TMGGILILLSIGISTLLWADL, VWIVLGVMVVFGAVGWADDWI, FFWTSVASLGAGIALYLIATQ, SIPLSIVPLGLAFIVFTYLVI, GLAIMPVVMVATGLGVFAYLS, LVVICSAMIGAGLAFLWYNAH, VFMGDVGALALGAMLGTIAVM, IVFAIMGGVFVMEAVSVFLQI, and QVVIRFWIITIMLVVLGLMTL.

The protein belongs to the glycosyltransferase 4 family. MraY subfamily. Mg(2+) is required as a cofactor.

The protein localises to the cell inner membrane. The enzyme catalyses UDP-N-acetyl-alpha-D-muramoyl-L-alanyl-gamma-D-glutamyl-meso-2,6-diaminopimeloyl-D-alanyl-D-alanine + di-trans,octa-cis-undecaprenyl phosphate = di-trans,octa-cis-undecaprenyl diphospho-N-acetyl-alpha-D-muramoyl-L-alanyl-D-glutamyl-meso-2,6-diaminopimeloyl-D-alanyl-D-alanine + UMP. It participates in cell wall biogenesis; peptidoglycan biosynthesis. Catalyzes the initial step of the lipid cycle reactions in the biosynthesis of the cell wall peptidoglycan: transfers peptidoglycan precursor phospho-MurNAc-pentapeptide from UDP-MurNAc-pentapeptide onto the lipid carrier undecaprenyl phosphate, yielding undecaprenyl-pyrophosphoryl-MurNAc-pentapeptide, known as lipid I. The protein is Phospho-N-acetylmuramoyl-pentapeptide-transferase of Acinetobacter baumannii (strain AB0057).